A 331-amino-acid polypeptide reads, in one-letter code: Hyaluronidase B (331 aa).

Intrachain disulfides connect Cys-19–Cys-308 and Cys-185–Cys-197. An N-linked (GlcNAc...) asparagine glycan is attached at Asn-79. Residue Glu-109 is the Proton donor of the active site.

Belongs to the glycosyl hydrolase 56 family. In terms of tissue distribution, expressed by the venom gland.

It localises to the secreted. The catalysed reaction is Random hydrolysis of (1-&gt;4)-linkages between N-acetyl-beta-D-glucosamine and D-glucuronate residues in hyaluronate.. Functionally, hydrolyzes high molecular weight hyaluronic acid to produce small oligosaccharides. This chain is Hyaluronidase B, found in Vespa velutina (Asian yellow-legged hornet).